Here is a 358-residue protein sequence, read N- to C-terminus: MPRLLVAASGTGGHLFPALSVADALLEPWSVRWVGVPDRLETSLVPGRYPLTTVKAGGLQGRGLRKLIQLIQLLAASGSIRRLIQRERIDAVFTTGGYIAAPAILAARWCGIPVVLHESNAIPGRVTRLLGRFCTRVAVGLEAAAPRIQGCRAVVTGTPVRAAFLQQQSLPTWVPQGSGPLLVVIGGSQGALGLNRMTRELFPSLLSSGCRIVHLTGSNDPDVGCIEHPLLVERPFSDEIPALLQHADLAISRAGAGSLSELAVSGTPTVLVPFPQAADRHQDANAVCAAAVAAAVIVHQHDPSETTLRDTVWRLLGSKLPGGDPGANPLPEMGQAMRELGVEDADQKLVTLLEGLLN.

UDP-N-acetyl-alpha-D-glucosamine-binding positions include 11-13 (TGG), Asn120, Arg161, Ser188, and Gln282.

Belongs to the glycosyltransferase 28 family. MurG subfamily.

It is found in the cell inner membrane. It catalyses the reaction di-trans,octa-cis-undecaprenyl diphospho-N-acetyl-alpha-D-muramoyl-L-alanyl-D-glutamyl-meso-2,6-diaminopimeloyl-D-alanyl-D-alanine + UDP-N-acetyl-alpha-D-glucosamine = di-trans,octa-cis-undecaprenyl diphospho-[N-acetyl-alpha-D-glucosaminyl-(1-&gt;4)]-N-acetyl-alpha-D-muramoyl-L-alanyl-D-glutamyl-meso-2,6-diaminopimeloyl-D-alanyl-D-alanine + UDP + H(+). It participates in cell wall biogenesis; peptidoglycan biosynthesis. Its function is as follows. Cell wall formation. Catalyzes the transfer of a GlcNAc subunit on undecaprenyl-pyrophosphoryl-MurNAc-pentapeptide (lipid intermediate I) to form undecaprenyl-pyrophosphoryl-MurNAc-(pentapeptide)GlcNAc (lipid intermediate II). In Synechococcus sp. (strain CC9311), this protein is UDP-N-acetylglucosamine--N-acetylmuramyl-(pentapeptide) pyrophosphoryl-undecaprenol N-acetylglucosamine transferase.